Here is a 204-residue protein sequence, read N- to C-terminus: MKLLHLDASILGTGSVSRELSALIVRRLAGDAPDAVTYRDLVAENPPHLTVATLPGAHPVSAMAGPLDAAGQAVRDASDRMLSEFVAADTVVIGVPMYNFTIPSQLKAWIDRLLVPGTTFRYGAAGPEGLMGGKRVILALARGGFYGPGTASVPAEHAEHYLRTVFGFMGIVPELVLAEGLAAGEHNKAQALASARDAVGQLAA.

FMN-binding positions include Ser-9, 15–17 (SVS), and 97–100 (MYNF).

Belongs to the azoreductase type 1 family. Homodimer. The cofactor is FMN.

The enzyme catalyses 2 a quinone + NADH + H(+) = 2 a 1,4-benzosemiquinone + NAD(+). It carries out the reaction N,N-dimethyl-1,4-phenylenediamine + anthranilate + 2 NAD(+) = 2-(4-dimethylaminophenyl)diazenylbenzoate + 2 NADH + 2 H(+). Functionally, quinone reductase that provides resistance to thiol-specific stress caused by electrophilic quinones. In terms of biological role, also exhibits azoreductase activity. Catalyzes the reductive cleavage of the azo bond in aromatic azo compounds to the corresponding amines. This Methylobacterium radiotolerans (strain ATCC 27329 / DSM 1819 / JCM 2831 / NBRC 15690 / NCIMB 10815 / 0-1) protein is FMN-dependent NADH:quinone oxidoreductase.